Here is a 373-residue protein sequence, read N- to C-terminus: Probable pectin lyase C (373 aa).

An N-terminal signal peptide occupies residues 1–17 (MKKYLLSLLAAVTYTTA). Disulfide bonds link Cys78–Cys95 and Cys87–Cys215. Asn140 and Asn229 each carry an N-linked (GlcNAc...) asparagine glycan. Arg245 is a catalytic residue. Cysteines 315 and 323 form a disulfide.

The protein belongs to the polysaccharide lyase 1 family.

It is found in the secreted. The enzyme catalyses Eliminative cleavage of (1-&gt;4)-alpha-D-galacturonan methyl ester to give oligosaccharides with 4-deoxy-6-O-methyl-alpha-D-galact-4-enuronosyl groups at their non-reducing ends.. Functionally, pectinolytic enzymes consist of four classes of enzymes: pectin lyase, polygalacturonase, pectin methylesterase and rhamnogalacturonase. Among pectinolytic enzymes, pectin lyase is the most important in depolymerization of pectin, since it cleaves internal glycosidic bonds of highly methylated pectins. This chain is Probable pectin lyase C (pelC), found in Emericella nidulans (strain FGSC A4 / ATCC 38163 / CBS 112.46 / NRRL 194 / M139) (Aspergillus nidulans).